The chain runs to 300 residues: Phospholipase A1 (300 aa).

The cysteines at positions 4 and 87 are disulfide-linked. S137 acts as the Nucleophile in catalysis. Residue D165 is the Charge relay system of the active site. 2 disulfides stabilise this stretch: C176–C181 and C218–C227. Residue H229 is the Charge relay system of the active site. 3 disulfides stabilise this stretch: C244–C268, C245–C293, and C261–C266.

Belongs to the AB hydrolase superfamily. Lipase family. In terms of tissue distribution, expressed by the venom gland.

Its subcellular location is the secreted. The catalysed reaction is a 1,2-diacyl-sn-glycero-3-phosphocholine + H2O = a 2-acyl-sn-glycero-3-phosphocholine + a fatty acid + H(+). With respect to regulation, local inflammatory effects are inhibited by antiserotonin drugs (cyproheptadine and methysergide), indomethacin, betamethasone, and antihistamine (chlorpheniramine). Functionally, catalyzes the hydrolysis of phosphatidylcholine with phospholipase A1 activity. Shows potent hemolytic activity that is responsible for its lethal effect. May act as an allergen. In vivo, induces local inflammatory effects. This chain is Phospholipase A1, found in Vespa basalis (Hornet).